A 300-amino-acid chain; its full sequence is Bifunctional protein FolD (300 aa).

NADP(+) is bound by residues 168–170 (GRS), S193, and I234.

It belongs to the tetrahydrofolate dehydrogenase/cyclohydrolase family. In terms of assembly, homodimer.

It catalyses the reaction (6R)-5,10-methylene-5,6,7,8-tetrahydrofolate + NADP(+) = (6R)-5,10-methenyltetrahydrofolate + NADPH. It carries out the reaction (6R)-5,10-methenyltetrahydrofolate + H2O = (6R)-10-formyltetrahydrofolate + H(+). The protein operates within one-carbon metabolism; tetrahydrofolate interconversion. In terms of biological role, catalyzes the oxidation of 5,10-methylenetetrahydrofolate to 5,10-methenyltetrahydrofolate and then the hydrolysis of 5,10-methenyltetrahydrofolate to 10-formyltetrahydrofolate. In Ehrlichia canis (strain Jake), this protein is Bifunctional protein FolD.